Consider the following 89-residue polypeptide: MVRKILIDFTKHITKSSLERHPHPAASFPLPASFTTVDSGPAKHSTAPPATPETSILVEDRNELPLRFHRLPVSEAEMQAVESGGAYAF.

This sequence belongs to the alpha-ketoglutarate dehydrogenase component 4 family. In terms of assembly, component of the 2-oxoglutarate dehydrogenase complex (OGDC), also called alpha-ketoglutarate dehydrogenase (KGDH) complex. The copmplex is composed of the catalytic subunits OGDH (2-oxoglutarate dehydrogenase kgd1; also called E1 subunit), DLST (dihydrolipoamide succinyltransferase kgd2; also called E2 subunit) and DLD (dihydrolipoamide dehydrogenase dld1; also called E3 subunit), and the assembly factor KGD4. Within OGDC, interacts (via N-terminus) with E3 subunit and (via C-terminus) with the complex core formed by E1 and E2 subunits.

It localises to the mitochondrion. Functionally, molecular adapter that is necessary to a form a stable 2-oxoglutarate dehydrogenase enzyme complex (OGDC). Required for incorporation of the E3 subunit (dld1) into the E1-E2 core (kgd1-kgd2) of mitochondrial OGDC, and acting as a stability factor for the fully assembled complex. The polypeptide is Alpha-ketoglutarate dehydrogenase subunit 4, mitochondrial (kgd4) (Schizosaccharomyces pombe (strain 972 / ATCC 24843) (Fission yeast)).